We begin with the raw amino-acid sequence, 180 residues long: UPF0340 protein BLi03936/BL03990 (180 aa).

It belongs to the UPF0340 family.

This Bacillus licheniformis (strain ATCC 14580 / DSM 13 / JCM 2505 / CCUG 7422 / NBRC 12200 / NCIMB 9375 / NCTC 10341 / NRRL NRS-1264 / Gibson 46) protein is UPF0340 protein BLi03936/BL03990.